We begin with the raw amino-acid sequence, 79 residues long: MASRKNQLAIDNDELMRRVEALINASKNRYRITVQVANRAKRRRYEDPDDIEDGWMKPIRRAVIEMSDELTEPEIIGDE.

Belongs to the RNA polymerase subunit omega family. As to quaternary structure, in cyanobacteria the RNAP catalytic core is composed of 2 alpha, 1 beta, 1 beta', 1 gamma and 1 omega subunit. When a sigma factor is associated with the core the holoenzyme is formed, which can initiate transcription.

It carries out the reaction RNA(n) + a ribonucleoside 5'-triphosphate = RNA(n+1) + diphosphate. In terms of biological role, promotes RNA polymerase assembly. Latches the N- and C-terminal regions of the beta' subunit thereby facilitating its interaction with the beta and alpha subunits. The protein is DNA-directed RNA polymerase subunit omega of Synechococcus sp. (strain JA-2-3B'a(2-13)) (Cyanobacteria bacterium Yellowstone B-Prime).